Here is a 244-residue protein sequence, read N- to C-terminus: MKIDLNADLGEGCASDAELLTLVSSANIACGFHAGDAQTMQACVREAIKNGVAIGAHPSFPDRENFGRSAMQLPPETVYAQTLYQIGALATIARAQGGVMRHVKPHGMLYNQAAKEAQLADAIARAVYACDPALILVGLAGSELIRAGKQYGLTTREEVFADRGYQADGSLVPRSQPGALIENEEQALAQTLEMVQHGRVKSITGEWATVTAQTVCLHGDGEHALAFARRLRSTFAEKEIVVAA.

This sequence belongs to the LamB/PxpA family. As to quaternary structure, forms a complex composed of PxpA, PxpB and PxpC.

The catalysed reaction is 5-oxo-L-proline + ATP + 2 H2O = L-glutamate + ADP + phosphate + H(+). In terms of biological role, catalyzes the cleavage of 5-oxoproline to form L-glutamate coupled to the hydrolysis of ATP to ADP and inorganic phosphate. The polypeptide is 5-oxoprolinase subunit A (Escherichia coli (strain SE11)).